A 127-amino-acid chain; its full sequence is Large ribosomal subunit protein bL19 (127 aa).

Belongs to the bacterial ribosomal protein bL19 family.

In terms of biological role, this protein is located at the 30S-50S ribosomal subunit interface and may play a role in the structure and function of the aminoacyl-tRNA binding site. In Synechococcus sp. (strain JA-3-3Ab) (Cyanobacteria bacterium Yellowstone A-Prime), this protein is Large ribosomal subunit protein bL19.